A 65-amino-acid polypeptide reads, in one-letter code: MKASELREKNNEELKKELLELLREQFGLRMQRGAGQLARPDRFSKIRKDIARIKTVMNERSVAGE.

This sequence belongs to the universal ribosomal protein uL29 family.

This Thioalkalivibrio sulfidiphilus (strain HL-EbGR7) protein is Large ribosomal subunit protein uL29.